Here is a 570-residue protein sequence, read N- to C-terminus: Aspartyl aminopeptidase (570 aa).

His-86 serves as a coordination point for Zn(2+). His-160 provides a ligand contact to substrate. Asp-324 is a Zn(2+) binding site. Substrate is bound at residue Glu-379. Zn(2+) contacts are provided by Glu-380 and Asp-434. Residues Asp-434, His-437, Lys-462, and Tyr-469 each coordinate substrate. A Zn(2+)-binding site is contributed by His-534.

This sequence belongs to the peptidase M18 family. In terms of assembly, homododecamer composed of homodimers and homotrimers that assemble into a tetrahedron shape to create a central tunnel containing the active sites. Homooctamer. Zn(2+) is required as a cofactor.

It localises to the cytoplasm. The catalysed reaction is Release of an N-terminal aspartate or glutamate from a peptide, with a preference for aspartate.. Activated by Co(2+). Inhibited by high concentrations (&gt;1mM) of Zn(2+). Its function is as follows. Aminopeptidase which specifically catalyzes the removal of glutamic acid or aspartic acid residues from the N-terminus of peptides. May play a role in the final step of host hemoglobin catabolism, by cleaving hemoglobin-derived oligopeptides in the cytoplasm. The protein is Aspartyl aminopeptidase of Plasmodium falciparum (isolate 3D7).